We begin with the raw amino-acid sequence, 307 residues long: Ribosomal RNA small subunit methyltransferase H (307 aa).

Residues 33-35, Asp51, Phe82, Asp96, and Gln103 contribute to the S-adenosyl-L-methionine site; that span reads GGY.

This sequence belongs to the methyltransferase superfamily. RsmH family.

The protein localises to the cytoplasm. The catalysed reaction is cytidine(1402) in 16S rRNA + S-adenosyl-L-methionine = N(4)-methylcytidine(1402) in 16S rRNA + S-adenosyl-L-homocysteine + H(+). Functionally, specifically methylates the N4 position of cytidine in position 1402 (C1402) of 16S rRNA. The chain is Ribosomal RNA small subunit methyltransferase H from Rickettsia rickettsii (strain Iowa).